The primary structure comprises 157 residues: MQKFPMTGPGLQNLEAELRHLKSEERPAIIRAIAEARSHGDLSENAEYHSARERQSFIEGRIAELEEIISAAEVIDPSTLSGDTVKFGAHVELIDEESDKEVTYQIVGVHEADIKAGRISVTSPLAKSLIGKKPGDTVSVPAPGGDRSYEILAVRFG.

Residues Ala46–Glu73 adopt a coiled-coil conformation.

The protein belongs to the GreA/GreB family.

Its function is as follows. Necessary for efficient RNA polymerase transcription elongation past template-encoded arresting sites. The arresting sites in DNA have the property of trapping a certain fraction of elongating RNA polymerases that pass through, resulting in locked ternary complexes. Cleavage of the nascent transcript by cleavage factors such as GreA or GreB allows the resumption of elongation from the new 3'terminus. GreA releases sequences of 2 to 3 nucleotides. The protein is Transcription elongation factor GreA of Acidiphilium cryptum (strain JF-5).